Reading from the N-terminus, the 160-residue chain is RNA pyrophosphohydrolase (160 aa).

A Nudix hydrolase domain is found at 10–154 (PYRKCVGVVL…KRDVYEQVFD (145 aa)). The Nudix box motif lies at 44-65 (GGIEDGEDARTAALRELVEETG).

It belongs to the Nudix hydrolase family. RppH subfamily. A divalent metal cation serves as cofactor.

In terms of biological role, accelerates the degradation of transcripts by removing pyrophosphate from the 5'-end of triphosphorylated RNA, leading to a more labile monophosphorylated state that can stimulate subsequent ribonuclease cleavage. The protein is RNA pyrophosphohydrolase of Dinoroseobacter shibae (strain DSM 16493 / NCIMB 14021 / DFL 12).